Reading from the N-terminus, the 104-residue chain is L-rhamnose mutarotase (104 aa).

A substrate-binding site is contributed by tyrosine 18. The active-site Proton donor is histidine 22. Substrate-binding positions include tyrosine 41 and 76-77 (WW).

This sequence belongs to the rhamnose mutarotase family. Homodimer.

It is found in the cytoplasm. It carries out the reaction alpha-L-rhamnose = beta-L-rhamnose. Its pathway is carbohydrate metabolism; L-rhamnose metabolism. Its function is as follows. Involved in the anomeric conversion of L-rhamnose. The protein is L-rhamnose mutarotase of Burkholderia cenocepacia (strain HI2424).